The primary structure comprises 232 residues: Large ribosomal subunit protein uL1 (232 aa).

This sequence belongs to the universal ribosomal protein uL1 family. As to quaternary structure, part of the 50S ribosomal subunit.

In terms of biological role, binds directly to 23S rRNA. The L1 stalk is quite mobile in the ribosome, and is involved in E site tRNA release. Protein L1 is also a translational repressor protein, it controls the translation of the L11 operon by binding to its mRNA. The sequence is that of Large ribosomal subunit protein uL1 from Xanthomonas oryzae pv. oryzae (strain MAFF 311018).